The primary structure comprises 200 residues: Pyridoxal 5'-phosphate synthase subunit PdxT (200 aa).

50 to 52 contacts L-glutamine; sequence GES. Cys82 acts as the Nucleophile in catalysis. Residues Arg110 and 138-139 contribute to the L-glutamine site; that span reads IR. Residues His174 and Glu176 each act as charge relay system in the active site.

The protein belongs to the glutaminase PdxT/SNO family. In the presence of PdxS, forms a dodecamer of heterodimers. Only shows activity in the heterodimer.

The catalysed reaction is aldehydo-D-ribose 5-phosphate + D-glyceraldehyde 3-phosphate + L-glutamine = pyridoxal 5'-phosphate + L-glutamate + phosphate + 3 H2O + H(+). It carries out the reaction L-glutamine + H2O = L-glutamate + NH4(+). Its pathway is cofactor biosynthesis; pyridoxal 5'-phosphate biosynthesis. Catalyzes the hydrolysis of glutamine to glutamate and ammonia as part of the biosynthesis of pyridoxal 5'-phosphate. The resulting ammonia molecule is channeled to the active site of PdxS. This Oceanobacillus iheyensis (strain DSM 14371 / CIP 107618 / JCM 11309 / KCTC 3954 / HTE831) protein is Pyridoxal 5'-phosphate synthase subunit PdxT.